A 316-amino-acid chain; its full sequence is Holliday junction branch migration complex subunit RuvB (316 aa).

Positions 1–165 are large ATPase domain (RuvB-L); that stretch reads MQITRPHNFE…FGYIARFVSY (165 aa). Residues Arg-5, Gly-46, Lys-49, Thr-50, Ser-51, 112–114, Arg-155, Tyr-165, and Arg-202 contribute to the ATP site; that span reads EDF. Residue Thr-50 coordinates Mg(2+). Residues 166–236 are small ATPAse domain (RuvB-S); it reads NAEDMKQIIR…IIKKTFKSLD (71 aa). The segment at 239-316 is head domain (RuvB-H); that stretch reads EYGLTKDHVE…TYLLKEKLIW (78 aa). Residues Lys-294 and Arg-299 each coordinate DNA.

It belongs to the RuvB family. Homohexamer. Forms an RuvA(8)-RuvB(12)-Holliday junction (HJ) complex. HJ DNA is sandwiched between 2 RuvA tetramers; dsDNA enters through RuvA and exits via RuvB. An RuvB hexamer assembles on each DNA strand where it exits the tetramer. Each RuvB hexamer is contacted by two RuvA subunits (via domain III) on 2 adjacent RuvB subunits; this complex drives branch migration. In the full resolvosome a probable DNA-RuvA(4)-RuvB(12)-RuvC(2) complex forms which resolves the HJ.

It localises to the cytoplasm. The catalysed reaction is ATP + H2O = ADP + phosphate + H(+). Functionally, the RuvA-RuvB-RuvC complex processes Holliday junction (HJ) DNA during genetic recombination and DNA repair, while the RuvA-RuvB complex plays an important role in the rescue of blocked DNA replication forks via replication fork reversal (RFR). RuvA specifically binds to HJ cruciform DNA, conferring on it an open structure. The RuvB hexamer acts as an ATP-dependent pump, pulling dsDNA into and through the RuvAB complex. RuvB forms 2 homohexamers on either side of HJ DNA bound by 1 or 2 RuvA tetramers; 4 subunits per hexamer contact DNA at a time. Coordinated motions by a converter formed by DNA-disengaged RuvB subunits stimulates ATP hydrolysis and nucleotide exchange. Immobilization of the converter enables RuvB to convert the ATP-contained energy into a lever motion, pulling 2 nucleotides of DNA out of the RuvA tetramer per ATP hydrolyzed, thus driving DNA branch migration. The RuvB motors rotate together with the DNA substrate, which together with the progressing nucleotide cycle form the mechanistic basis for DNA recombination by continuous HJ branch migration. Branch migration allows RuvC to scan DNA until it finds its consensus sequence, where it cleaves and resolves cruciform DNA. The chain is Holliday junction branch migration complex subunit RuvB from Mycoplasmopsis synoviae (strain 53) (Mycoplasma synoviae).